Consider the following 439-residue polypeptide: 23S rRNA (uracil(1939)-C(5))-methyltransferase RlmD (439 aa).

Positions 10–69 (KTQLNTRHQAVQVERLDHHGAGIAYLKKKPLFIDGALPGEEVVTQLVEEKSKFARGKLIK) constitute a TRAM domain. [4Fe-4S] cluster-binding residues include Cys82, Cys88, Cys91, and Cys169. S-adenosyl-L-methionine-binding residues include Gln272, Phe301, Asn306, Glu322, Asn349, and Asp370. Cys396 functions as the Nucleophile in the catalytic mechanism.

It belongs to the class I-like SAM-binding methyltransferase superfamily. RNA M5U methyltransferase family. RlmD subfamily.

It carries out the reaction uridine(1939) in 23S rRNA + S-adenosyl-L-methionine = 5-methyluridine(1939) in 23S rRNA + S-adenosyl-L-homocysteine + H(+). Functionally, catalyzes the formation of 5-methyl-uridine at position 1939 (m5U1939) in 23S rRNA. This chain is 23S rRNA (uracil(1939)-C(5))-methyltransferase RlmD, found in Vibrio parahaemolyticus serotype O3:K6 (strain RIMD 2210633).